The sequence spans 62 residues: Sperm protamine P1 (62 aa).

Residues 1 to 62 (MARYRHSRSR…RYSRRRRRRY (62 aa)) are disordered.

The protein belongs to the protamine P1 family. Testis.

It is found in the nucleus. It localises to the chromosome. Its function is as follows. Protamines substitute for histones in the chromatin of sperm during the haploid phase of spermatogenesis. They compact sperm DNA into a highly condensed, stable and inactive complex. The protein is Sperm protamine P1 (PRM1) of Lagostrophus fasciatus (Banded hare-wallaby).